The primary structure comprises 162 residues: Peptide deformylase (162 aa).

Residues Cys91 and His133 each contribute to the Fe cation site. The active site involves Glu134. His137 is a binding site for Fe cation.

The protein belongs to the polypeptide deformylase family. It depends on Fe(2+) as a cofactor.

The catalysed reaction is N-terminal N-formyl-L-methionyl-[peptide] + H2O = N-terminal L-methionyl-[peptide] + formate. Its function is as follows. Removes the formyl group from the N-terminal Met of newly synthesized proteins. Requires at least a dipeptide for an efficient rate of reaction. N-terminal L-methionine is a prerequisite for activity but the enzyme has broad specificity at other positions. The polypeptide is Peptide deformylase (Finegoldia magna (strain ATCC 29328 / DSM 20472 / WAL 2508) (Peptostreptococcus magnus)).